The chain runs to 299 residues: Protease HtpX homolog (299 aa).

2 helical membrane-spanning segments follow: residues 15 to 35 (ILLL…GYLF) and 39 to 59 (GLGG…SMIF). His143 contributes to the Zn(2+) binding site. Glu144 is a catalytic residue. His147 is a binding site for Zn(2+). The next 2 helical transmembrane spans lie at 158–178 (IAVA…RMMW) and 198–218 (IIML…ATLV). Residue Glu227 participates in Zn(2+) binding.

Belongs to the peptidase M48B family. Requires Zn(2+) as cofactor.

It localises to the cell membrane. This chain is Protease HtpX homolog, found in Streptococcus pneumoniae serotype 4 (strain ATCC BAA-334 / TIGR4).